A 718-amino-acid chain; its full sequence is MINSFKKLIILISLVIILLSSNNIFIDSFKIPVNQKNVKSSGDSSYQIGAGIYDITGASAEVNLMGYANPLQVGAGIHFRQRARAFVFVDSNGNRAVYVSTDSCMIFQEVKIHVVELLQDIFGPNVYTEANVLLSGTHTHSGPAGFSQYALYGITSLGFYKKNFDTICNGIVQAIVKAHKSVQPANMFTETGELWNTNINRSPFAYDNNPEEEKAMYDSNVDKNMTVLRIEDMNGNPFAAISFFAVHCTSMNNTNHLISGDNKGYASYLWEKQVNGPGTAGKGPFVAAFGQSNEGDVSPNTRGPTCRDGSPCDYKTSTCNGRNEECWSLGPGKDGDMFESTQIIGGNQFNKALELFNNASIQVSGPVQYRHSWVQFTNVSVEPPYNSGVDNATTCRGAMGYSFAAGTTDGPGAFNFVQSDNNTSGNPFWNFIGDFIAKPTPDQIRCQSPKPILLDVGMVEPIPWVPDVMPIQIVTIGQIVLVAVPGEFTTMSGRRLRNSVREIIGESIENPIVLIAGLSNTYSGYIATFEEYQVQRYEGASTVFGPHTLGSYMQEFGKLAQSIVDGTTVPAGPTPRNLTGHTLFFLPPVIVDAAPDFDDFGEVSIDVNLNYSVNETVSCVFYGGNPRNDFMIESSFLSVDLLTGTDQWTTVLDDGDWDTKFKWKMHDLGFSLITIEWVIAPDTTPGTYRITHSGFAKKNPFSSNLTPYQGISRNFVVQ.

The first 20 residues, 1 to 20, serve as a signal peptide directing secretion; that stretch reads MINSFKKLIILISLVIILLS. Residues asparagine 224 and asparagine 252 are each glycosylated (N-linked (GlcNAc...) asparagine). The active-site Nucleophile is serine 298. Asparagine 358, asparagine 378, asparagine 391, asparagine 421, asparagine 422, asparagine 577, asparagine 610, and asparagine 614 each carry an N-linked (GlcNAc...) asparagine glycan.

It belongs to the neutral ceramidase family.

The protein localises to the secreted. It carries out the reaction an N-acylsphing-4-enine + H2O = sphing-4-enine + a fatty acid. Hydrolyzes the sphingolipid ceramide into sphingosine and free fatty acid. This is Neutral ceramidase B (dcd2B) from Dictyostelium discoideum (Social amoeba).